The chain runs to 84 residues: ATP synthase subunit c (84 aa).

The next 2 membrane-spanning stretches (helical) occupy residues 9–29 (IFGS…GFSL) and 54–74 (IVAG…LLFI).

Belongs to the ATPase C chain family. In terms of assembly, F-type ATPases have 2 components, F(1) - the catalytic core - and F(0) - the membrane proton channel. F(1) has five subunits: alpha(3), beta(3), gamma(1), delta(1), epsilon(1). F(0) has three main subunits: a(1), b(2) and c(10-14). The alpha and beta chains form an alternating ring which encloses part of the gamma chain. F(1) is attached to F(0) by a central stalk formed by the gamma and epsilon chains, while a peripheral stalk is formed by the delta and b chains.

It is found in the cell inner membrane. In terms of biological role, f(1)F(0) ATP synthase produces ATP from ADP in the presence of a proton or sodium gradient. F-type ATPases consist of two structural domains, F(1) containing the extramembraneous catalytic core and F(0) containing the membrane proton channel, linked together by a central stalk and a peripheral stalk. During catalysis, ATP synthesis in the catalytic domain of F(1) is coupled via a rotary mechanism of the central stalk subunits to proton translocation. Functionally, key component of the F(0) channel; it plays a direct role in translocation across the membrane. A homomeric c-ring of between 10-14 subunits forms the central stalk rotor element with the F(1) delta and epsilon subunits. This is ATP synthase subunit c from Histophilus somni (strain 129Pt) (Haemophilus somnus).